The primary structure comprises 244 residues: Phosphoadenosine 5'-phosphosulfate reductase (244 aa).

Cys239 acts as the Nucleophile; cysteine thiosulfonate intermediate in catalysis.

The protein belongs to the PAPS reductase family. CysH subfamily.

The protein resides in the cytoplasm. It carries out the reaction [thioredoxin]-disulfide + sulfite + adenosine 3',5'-bisphosphate + 2 H(+) = [thioredoxin]-dithiol + 3'-phosphoadenylyl sulfate. It participates in sulfur metabolism; hydrogen sulfide biosynthesis; sulfite from sulfate: step 3/3. Functionally, catalyzes the formation of sulfite from phosphoadenosine 5'-phosphosulfate (PAPS) using thioredoxin as an electron donor. The sequence is that of Phosphoadenosine 5'-phosphosulfate reductase from Salmonella choleraesuis (strain SC-B67).